A 166-amino-acid chain; its full sequence is Large ribosomal subunit protein uL10 (166 aa).

The protein belongs to the universal ribosomal protein uL10 family. Part of the ribosomal stalk of the 50S ribosomal subunit. The N-terminus interacts with L11 and the large rRNA to form the base of the stalk. The C-terminus forms an elongated spine to which L12 dimers bind in a sequential fashion forming a multimeric L10(L12)X complex.

In terms of biological role, forms part of the ribosomal stalk, playing a central role in the interaction of the ribosome with GTP-bound translation factors. In Ureaplasma parvum serovar 3 (strain ATCC 27815 / 27 / NCTC 11736), this protein is Large ribosomal subunit protein uL10.